Reading from the N-terminus, the 211-residue chain is MLTIALSKGRILDDTLPLLAEAGIVPTENPDKSRKLIIPTTQADVRLLIVRATDVPTYVEHGAADLGVAGKDVLMEYTGQGLYEPLDLQIAKCRLMTAGAIGAVEPKGRLRVATKFVNVAKRYYAEQGRQVDIIKLYGSMELAPLIGLADKIIDVVDTGNTLRANGLEPQELIATISSRLVVNKASMKMQHARIQALIDTLRKAVESRHRC.

Belongs to the ATP phosphoribosyltransferase family. Short subfamily. In terms of assembly, heteromultimer composed of HisG and HisZ subunits.

It localises to the cytoplasm. It catalyses the reaction 1-(5-phospho-beta-D-ribosyl)-ATP + diphosphate = 5-phospho-alpha-D-ribose 1-diphosphate + ATP. Its pathway is amino-acid biosynthesis; L-histidine biosynthesis; L-histidine from 5-phospho-alpha-D-ribose 1-diphosphate: step 1/9. Its function is as follows. Catalyzes the condensation of ATP and 5-phosphoribose 1-diphosphate to form N'-(5'-phosphoribosyl)-ATP (PR-ATP). Has a crucial role in the pathway because the rate of histidine biosynthesis seems to be controlled primarily by regulation of HisG enzymatic activity. The sequence is that of ATP phosphoribosyltransferase from Pseudomonas syringae pv. tomato (strain ATCC BAA-871 / DC3000).